We begin with the raw amino-acid sequence, 175 residues long: MTGKELNKIVAAILFASLIAMIVRFVANILYKPNLQVLNRGYSIAIQESSVNTNATVIVQEPVNIPEVMKTANANHGREIVKKCLMCHSLDKDGPNKLGPHLWNIVGRSKASITDYKYSFAISKLGGVWDDENLFAFLHKPSSYAPGTKMSFAGISKPQDIADVILFLKNYVHDK.

The Cytoplasmic segment spans residues 1–8 (MTGKELNK). A helical; Signal-anchor membrane pass occupies residues 9–29 (IVAAILFASLIAMIVRFVANI). The Periplasmic portion of the chain corresponds to 30-175 (LYKPNLQVLN…LFLKNYVHDK (146 aa)). 4 residues coordinate heme c: cysteine 84, cysteine 87, histidine 88, and methionine 150.

Belongs to the cytochrome c family. In terms of processing, binds 1 heme c group covalently per subunit.

The protein localises to the cell membrane. Its function is as follows. May be involved in electron transfer from bc1 complex to aa3. The chain is Cytochrome c homolog (cycM) from Rickettsia typhi (strain ATCC VR-144 / Wilmington).